Here is a 572-residue protein sequence, read N- to C-terminus: Potassium-transporting ATPase potassium-binding subunit (572 aa).

11 helical membrane passes run 5–25 (LAAG…YVPL), 71–91 (VGYT…LYVL), 97–117 (VLPL…NTAV), 142–162 (GLAV…VALI), 188–208 (ILLP…TIQS), 258–278 (PTPL…VCLT), 292–312 (LTVL…VTWA), 387–407 (GLYG…LLVG), 422–442 (ITMA…GTGI), 500–520 (LGMA…ALAG), and 548–568 (GTVL…GPIA).

It belongs to the KdpA family. The system is composed of three essential subunits: KdpA, KdpB and KdpC.

The protein localises to the cell membrane. In terms of biological role, part of the high-affinity ATP-driven potassium transport (or Kdp) system, which catalyzes the hydrolysis of ATP coupled with the electrogenic transport of potassium into the cytoplasm. This subunit binds the extracellular potassium ions and delivers the ions to the membrane domain of KdpB through an intramembrane tunnel. In Mycobacteroides abscessus (strain ATCC 19977 / DSM 44196 / CCUG 20993 / CIP 104536 / JCM 13569 / NCTC 13031 / TMC 1543 / L948) (Mycobacterium abscessus), this protein is Potassium-transporting ATPase potassium-binding subunit.